Here is a 163-residue protein sequence, read N- to C-terminus: UPF0262 protein RPD_4278 (163 aa).

Belongs to the UPF0262 family.

This is UPF0262 protein RPD_4278 from Rhodopseudomonas palustris (strain BisB5).